A 460-amino-acid polypeptide reads, in one-letter code: Wadjet protein JetA (460 aa).

Component of antiplasmid transformation system Wadjet type I, composed of JetA, JetB, JetC and JetD. Expression of Wadjet type I in B.subtilis (strain BEST7003) reduces the transformation efficiency of plasmid pHCMC05. This Bacillus cereus (strain Q1) protein is Wadjet protein JetA.